The sequence spans 234 residues: Sugar fermentation stimulation protein A (234 aa).

The segment at residues 201 to 220 is a DNA-binding region (H-T-H motif); that stretch reads LLSEAQNKGVEVLAYKAELS.

It belongs to the SfsA family.

Functionally, binds to DNA non-specifically. Could be a regulatory factor involved in maltose metabolism. This is Sugar fermentation stimulation protein A from Salmonella choleraesuis (strain SC-B67).